A 424-amino-acid polypeptide reads, in one-letter code: Hemagglutinin-esterase (424 aa).

The first 16 residues, 1-16 (MFLLPRFVLVSCIIGS), serve as a signal peptide directing secretion. Positions 7 to 127 (FVLVSCIIGS…SNDIWMQNKG (121 aa)) are esterase domain 1. Over 17–392 (LGFENPPTNV…PICVYDPLPL (376 aa)) the chain is Virion surface. Ser-40 (nucleophile) is an active-site residue. A disulfide bond links Cys-44 and Cys-65. N-linked (GlcNAc...) asparagine; by host glycosylation is found at Asn-54, Asn-89, Asn-153, Asn-236, and Asn-301. Disulfide bonds link Cys-113-Cys-162, Cys-197-Cys-276, and Cys-205-Cys-249. A receptor binding region spans residues 128 to 266 (LFYTQVYKNM…GNYLAISNEL (139 aa)). Residues 267-379 (LLTVPTKAIC…RCPTAADINT (113 aa)) are esterase domain 2. Cys-307 and Cys-312 are joined by a disulfide. Asn-316 carries N-linked (GlcNAc...) asparagine; by host glycosylation. Active-site charge relay system residues include Asp-326 and His-329. Cys-347 and Cys-371 are disulfide-bonded. A glycan (N-linked (GlcNAc...) asparagine; by host) is linked at Asn-358. The helical transmembrane segment at 393-413 (ILLGILLGVAVIIIVVLLLYF) threads the bilayer. Residues 414–424 (MVDNGTRLHDA) lie on the Intravirion side of the membrane. The N-linked (GlcNAc...) asparagine; by host glycan is linked to Asn-417.

Belongs to the influenza type C/coronaviruses hemagglutinin-esterase family. As to quaternary structure, homodimer; disulfide-linked. Forms a complex with the M protein in the pre-Golgi. Associates then with S-M complex to form a ternary complex S-M-HE. Post-translationally, N-glycosylated in the host RER.

It localises to the virion membrane. The protein resides in the host cell membrane. The catalysed reaction is N-acetyl-9-O-acetylneuraminate + H2O = N-acetylneuraminate + acetate + H(+). It catalyses the reaction N-acetyl-4-O-acetylneuraminate + H2O = N-acetylneuraminate + acetate + H(+). Functionally, structural protein that makes short spikes at the surface of the virus. Contains receptor binding and receptor-destroying activities. Mediates de-O-acetylation of N-acetyl-4-O-acetylneuraminic acid, which is probably the receptor determinant recognized by the virus on the surface of erythrocytes and susceptible cells. This receptor-destroying activity is important for virus release as it probably helps preventing self-aggregation and ensures the efficient spread of the progeny virus from cell to cell. May serve as a secondary viral attachment protein for initiating infection, the spike protein being the major one. May become a target for both the humoral and the cellular branches of the immune system. In Bovine coronavirus (strain G95) (BCoV), this protein is Hemagglutinin-esterase.